Consider the following 38-residue polypeptide: CMGYDIHCTDRLPCCFGLECVKTSGYWWYKKTYCRRKS.

Intrachain disulfides connect Cys1-Cys15, Cys8-Cys20, and Cys14-Cys34. The residue at position 38 (Ser38) is a Serine amide.

The protein belongs to the neurotoxin 14 (magi-1) family. 09 (magi-1) subfamily. As to expression, expressed by the venom gland.

It localises to the secreted. In terms of biological role, insecticidal neurotoxin. Shows competition for site 3 of insect voltage-gated sodium channels (Nav). This chain is Mu-hexatoxin-Mg1b, found in Macrothele gigas (Japanese funnel web spider).